A 186-amino-acid chain; its full sequence is UPF0301 protein Neut_0448 (186 aa).

The protein belongs to the UPF0301 (AlgH) family.

The chain is UPF0301 protein Neut_0448 from Nitrosomonas eutropha (strain DSM 101675 / C91 / Nm57).